We begin with the raw amino-acid sequence, 247 residues long: Sugar fermentation stimulation protein homolog (247 aa).

This sequence belongs to the SfsA family.

This Oleidesulfovibrio alaskensis (strain ATCC BAA-1058 / DSM 17464 / G20) (Desulfovibrio alaskensis) protein is Sugar fermentation stimulation protein homolog.